Here is a 217-residue protein sequence, read N- to C-terminus: Ribonuclease HII (217 aa).

The RNase H type-2 domain maps to 34–217 (WPVAGTDEAG…RMSFRPLKRD (184 aa)). A divalent metal cation is bound by residues Asp40, Glu41, and Asp131.

Belongs to the RNase HII family. Requires Mn(2+) as cofactor. It depends on Mg(2+) as a cofactor.

It localises to the cytoplasm. It carries out the reaction Endonucleolytic cleavage to 5'-phosphomonoester.. In terms of biological role, endonuclease that specifically degrades the RNA of RNA-DNA hybrids. The chain is Ribonuclease HII from Agrobacterium fabrum (strain C58 / ATCC 33970) (Agrobacterium tumefaciens (strain C58)).